A 63-amino-acid polypeptide reads, in one-letter code: UPF0512 protein X (63 aa).

The protein belongs to the UPF0512 family.

The sequence is that of UPF0512 protein X from Dictyostelium discoideum (Social amoeba).